A 41-amino-acid chain; its full sequence is Large ribosomal subunit protein bL36 (41 aa).

Belongs to the bacterial ribosomal protein bL36 family.

The protein is Large ribosomal subunit protein bL36 of Opitutus terrae (strain DSM 11246 / JCM 15787 / PB90-1).